The sequence spans 207 residues: Protein DMP1 (207 aa).

The tract at residues 1 to 20 (MSETSLLIPKTNSPASSENM) is disordered. The next 4 helical transmembrane spans lie at 33-53 (LIKLLPTGTLFIYLLLNPVLT), 64-84 (VMSSILVALCSFSCVFSCFTD), 121-141 (IADFVHAGFVLAVFGTLVLLD), and 159-179 (LVMALPPAVGVASATIFALFP).

The protein belongs to the plant DMP1 protein family. In terms of tissue distribution, expressed in leaves, siliques and roots.

It is found in the endoplasmic reticulum membrane. The protein resides in the vacuole membrane. Involved in membrane remodeling including fission during breakdown of the endoplasmic reticulum (ER) and the tonoplast during leaf senescence and in membrane fusion during vacuole biogenesis in roots. In Arabidopsis thaliana (Mouse-ear cress), this protein is Protein DMP1.